A 234-amino-acid polypeptide reads, in one-letter code: LexA repressor (234 aa).

Positions 26 to 46 (FDEMKDALDLRSKSGIHRLIT) form a DNA-binding region, H-T-H motif. A disordered region spans residues 80 to 107 (RGFTPSVIEGNLGKVRPPSPQHAEDDSD). Residues Ser-155 and Lys-193 each act as for autocatalytic cleavage activity in the active site.

Belongs to the peptidase S24 family. As to quaternary structure, homodimer.

It carries out the reaction Hydrolysis of Ala-|-Gly bond in repressor LexA.. Functionally, represses a number of genes involved in the response to DNA damage (SOS response), including recA and lexA. In the presence of single-stranded DNA, RecA interacts with LexA causing an autocatalytic cleavage which disrupts the DNA-binding part of LexA, leading to derepression of the SOS regulon and eventually DNA repair. The chain is LexA repressor from Rhodopseudomonas palustris (strain HaA2).